The sequence spans 229 residues: MMKIAILGAMSEEITPLLETLKDYTKIEHANNTYYFAKYKNHELVLAYSKIGKVNSTLSASVMIEKFGAQALLFTGVAGAFNPELEIGDLLYATKLAQYDLDITAFGHPLGFVPGNEIFIKTDEKLNNLALEVAKELNIKLRAGIIATGDEFICDEAKKAKIREIFNADACEMEGASVALVCDALKVPCFILRAMSDKAGEKAEFDFDEFVINSAKISANFVLKMCEKL.

Glutamate 13 acts as the Proton acceptor in catalysis. Residues glycine 79, isoleucine 153, and 173–174 (ME) each bind substrate. Aspartate 197 (proton donor) is an active-site residue.

Belongs to the PNP/UDP phosphorylase family. Homodimer.

It carries out the reaction 6-amino-6-deoxyfutalosine + H2O = dehypoxanthine futalosine + adenine. The catalysed reaction is S-adenosyl-L-homocysteine + H2O = S-(5-deoxy-D-ribos-5-yl)-L-homocysteine + adenine. The enzyme catalyses S-methyl-5'-thioadenosine + H2O = 5-(methylsulfanyl)-D-ribose + adenine. It catalyses the reaction 5'-deoxyadenosine + H2O = 5-deoxy-D-ribose + adenine. Its pathway is quinol/quinone metabolism; menaquinone biosynthesis. It functions in the pathway amino-acid biosynthesis; L-methionine biosynthesis via salvage pathway; S-methyl-5-thio-alpha-D-ribose 1-phosphate from S-methyl-5'-thioadenosine (hydrolase route): step 1/2. In terms of biological role, catalyzes the direct conversion of aminodeoxyfutalosine (AFL) into dehypoxanthine futalosine (DHFL) and adenine via the hydrolysis of the N-glycosidic bond; this reaction seems to represent an essential step in the menaquinone biosynthesis pathway in Campylobacter species. Also catalyzes the hydrolysis of 5'-methylthioadenosine (MTA) to adenine and 5'-methylthioribose. Can also probably use S-adenosylhomocysteine (SAH) as substrate, leading to adenine and S-ribosylhomocysteine. These other activities highlight the tremendous versatility of the enzyme, which also plays key roles in S-adenosylmethionine recycling and in the biosynthesis of the quorum-sensing molecule autoinducer-2. Shows negligible activity with futalosine (FL) as substrate. This is Aminodeoxyfutalosine nucleosidase (pfs) from Campylobacter jejuni subsp. jejuni serotype O:2 (strain ATCC 700819 / NCTC 11168).